Consider the following 249-residue polypeptide: Glucosamine-6-phosphate deaminase 2 (249 aa).

Asp67 functions as the Proton acceptor; for enolization step in the catalytic mechanism. Asn136 (for ring-opening step) is an active-site residue. The active-site Proton acceptor; for ring-opening step is the His138. Catalysis depends on Glu143, which acts as the For ring-opening step.

This sequence belongs to the glucosamine/galactosamine-6-phosphate isomerase family. NagB subfamily.

It carries out the reaction alpha-D-glucosamine 6-phosphate + H2O = beta-D-fructose 6-phosphate + NH4(+). Its pathway is amino-sugar metabolism; N-acetylneuraminate degradation; D-fructose 6-phosphate from N-acetylneuraminate: step 5/5. Its function is as follows. Catalyzes the reversible isomerization-deamination of glucosamine 6-phosphate (GlcN6P) to form fructose 6-phosphate (Fru6P) and ammonium ion. Required for growth on glucosamine and also provides the majority of GlcN6P deaminase activity during growth on N-acetylglucosamine (GlcNAc). The sequence is that of Glucosamine-6-phosphate deaminase 2 from Bacillus subtilis (strain 168).